A 339-amino-acid chain; its full sequence is DNA-directed RNA polymerase subunit alpha (339 aa).

The alpha N-terminal domain (alpha-NTD) stretch occupies residues Met1–Glu233. Residues Lys264–Phe339 form an alpha C-terminal domain (alpha-CTD) region.

It belongs to the RNA polymerase alpha chain family. In terms of assembly, in plastids the minimal PEP RNA polymerase catalytic core is composed of four subunits: alpha, beta, beta', and beta''. When a (nuclear-encoded) sigma factor is associated with the core the holoenzyme is formed, which can initiate transcription.

The protein localises to the plastid. It localises to the chloroplast. The catalysed reaction is RNA(n) + a ribonucleoside 5'-triphosphate = RNA(n+1) + diphosphate. Its function is as follows. DNA-dependent RNA polymerase catalyzes the transcription of DNA into RNA using the four ribonucleoside triphosphates as substrates. The chain is DNA-directed RNA polymerase subunit alpha from Psathyrostachys rupestris (Hordeum rupestre).